Here is a 161-residue protein sequence, read N- to C-terminus: NADH-quinone oxidoreductase subunit I (161 aa).

2 4Fe-4S ferredoxin-type domains span residues 52-82 and 92-121; these read LRRYPNGEERCIACKLCEAICPAMAITIESE and SRYDIDLTKCIFCGFCEEACPVDAVVETRV. 8 residues coordinate [4Fe-4S] cluster: C62, C65, C68, C72, C101, C104, C107, and C111.

The protein belongs to the complex I 23 kDa subunit family. As to quaternary structure, NDH-1 is composed of 14 different subunits. Subunits NuoA, H, J, K, L, M, N constitute the membrane sector of the complex. [4Fe-4S] cluster serves as cofactor.

It localises to the cell inner membrane. The catalysed reaction is a quinone + NADH + 5 H(+)(in) = a quinol + NAD(+) + 4 H(+)(out). Functionally, NDH-1 shuttles electrons from NADH, via FMN and iron-sulfur (Fe-S) centers, to quinones in the respiratory chain. The immediate electron acceptor for the enzyme in this species is believed to be ubiquinone. Couples the redox reaction to proton translocation (for every two electrons transferred, four hydrogen ions are translocated across the cytoplasmic membrane), and thus conserves the redox energy in a proton gradient. In Azoarcus sp. (strain BH72), this protein is NADH-quinone oxidoreductase subunit I.